A 417-amino-acid chain; its full sequence is Putative F-box protein At4g21240 (417 aa).

A compositionally biased stretch (acidic residues) spans 1–12 (MDRREEEEEETG). The interval 1 to 25 (MDRREEEEEETGYGEKGTRNQSKED) is disordered. Residues 16-25 (KGTRNQSKED) show a composition bias toward basic and acidic residues. An F-box domain is found at 30-76 (GKIFELIPLDMIPDILLRLPAKSAVRFRIVSKLWLSITTRPYFIRSF).

This chain is Putative F-box protein At4g21240, found in Arabidopsis thaliana (Mouse-ear cress).